A 281-amino-acid polypeptide reads, in one-letter code: MSKFLVKAPAKINLFLHILGKNSNYHSLESLLVFVNIYDILEVTIDAPRSGVYFTNLKINRYNNTITKVIYLLSQHSTSSVNVFVSVIKNILVSAGLAGGSADAAAVMRLLGNVWDIQPQVLEELALEIGSDVPACLHSKTLFARGRGEDILLLPDLCLPKYIVIVAPKGKPLSTVKVFNNYEPSAFSSPICDNLPVRQDDWLELIYNARNDLLDTALKFVPEIEEILFVLRKFRNCLIARMTGSGATCFALFNELSDAEVVVRELQMTRPDWIVFNAKIL.

Lys11 is an active-site residue. 92-102 contributes to the ATP binding site; the sequence is LVSAGLAGGSA. Asp132 is a catalytic residue.

This sequence belongs to the GHMP kinase family. IspE subfamily.

The catalysed reaction is 4-CDP-2-C-methyl-D-erythritol + ATP = 4-CDP-2-C-methyl-D-erythritol 2-phosphate + ADP + H(+). It functions in the pathway isoprenoid biosynthesis; isopentenyl diphosphate biosynthesis via DXP pathway; isopentenyl diphosphate from 1-deoxy-D-xylulose 5-phosphate: step 3/6. Its function is as follows. Catalyzes the phosphorylation of the position 2 hydroxy group of 4-diphosphocytidyl-2C-methyl-D-erythritol. This Ehrlichia ruminantium (strain Welgevonden) protein is 4-diphosphocytidyl-2-C-methyl-D-erythritol kinase.